The following is a 462-amino-acid chain: Sugar transporter ERD6-like 2 (462 aa).

The next 12 membrane-spanning stretches (helical) occupy residues 23 to 43 (SGLL…GCAM), 70 to 90 (VMTL…ALVG), 96 to 116 (WISD…HDII), 123 to 143 (LFLG…IAEI), 156 to 176 (NQLL…FFHW), 178 to 198 (TLAL…FFIP), 261 to 281 (LIIG…AISA), 296 to 316 (IGTT…MLTV), 324 to 344 (LLMI…LSYY), 357 to 377 (VMLI…LGGL), 397 to 417 (LVTM…NFMI), and 423 to 443 (GTYF…WTLV).

The protein belongs to the major facilitator superfamily. Sugar transporter (TC 2.A.1.1) family.

The protein resides in the membrane. Its function is as follows. Sugar transporter. This chain is Sugar transporter ERD6-like 2 (SUGTL3), found in Arabidopsis thaliana (Mouse-ear cress).